A 20-amino-acid polypeptide reads, in one-letter code: Protein C activator (20 aa).

The Peptidase S1 domain maps to valine 1–alanine 20.

It belongs to the peptidase S1 family. Snake venom subfamily. Monomer. Glycosylated. In terms of tissue distribution, expressed by the venom gland.

It is found in the secreted. Inhibited by calcium. Its function is as follows. Snake venom serine protease that selectively cleaves the heavy chain of protein C (PROC). This activation is thrombomodulin-independent. The polypeptide is Protein C activator (Agkistrodon bilineatus (Cantil)).